Here is a 195-residue protein sequence, read N- to C-terminus: Nicotinamide riboside kinase 1 (195 aa).

ATP is bound at residue 10-18 (GVTNGGKTT). Thr17 and Asp36 together coordinate Mg(2+). The Proton acceptor role is filled by Asp36. Residues 36 to 39 (DDFF) and 55 to 56 (YD) contribute to the substrate site. Arg128 is an ATP binding site. Residues Arg129 and 134–135 (YE) contribute to the substrate site. Residues 132-134 (RVY) and 172-174 (RSE) each bind ATP.

This sequence belongs to the uridine kinase family. NRK subfamily. As to quaternary structure, monomer.

It catalyses the reaction beta-nicotinamide D-riboside + ATP = beta-nicotinamide D-ribonucleotide + ADP + H(+). The catalysed reaction is beta-D-ribosylnicotinate + ATP = nicotinate beta-D-ribonucleotide + ADP + H(+). It participates in cofactor biosynthesis; NAD(+) biosynthesis. In terms of biological role, catalyzes the phosphorylation of nicotinamide riboside (NR) and nicotinic acid riboside (NaR) to form nicotinamide mononucleotide (NMN) and nicotinic acid mononucleotide (NaMN). The protein is Nicotinamide riboside kinase 1 (Nmrk1) of Rattus norvegicus (Rat).